We begin with the raw amino-acid sequence, 87 residues long: Olfactory receptor-like protein HbT2 (87 aa).

At lysine 1–threonine 8 the chain is on the cytoplasmic side. The chain crosses the membrane as a helical span at residues tryptophan 9–cysteine 29. Residues glycine 30 to glutamate 55 are Extracellular-facing. The chain crosses the membrane as a helical span at residues glycine 56–serine 76. Topologically, residues serine 77–asparagine 87 are cytoplasmic.

The protein belongs to the G-protein coupled receptor 1 family.

It is found in the cell membrane. Its function is as follows. Odorant receptor. This chain is Olfactory receptor-like protein HbT2, found in Apis mellifera ligustica (Common honeybee).